A 404-amino-acid chain; its full sequence is Deoxyguanosinetriphosphate triphosphohydrolase-like protein (404 aa).

The region spanning 69 to 217 (RLTHSLEVAQ…AGIADDIAYD (149 aa)) is the HD domain.

Belongs to the dGTPase family. Type 2 subfamily.

The polypeptide is Deoxyguanosinetriphosphate triphosphohydrolase-like protein (Rhodopseudomonas palustris (strain BisB18)).